The sequence spans 102 residues: Small ribosomal subunit protein uS14 (102 aa).

It belongs to the universal ribosomal protein uS14 family. As to quaternary structure, part of the 30S ribosomal subunit. Contacts proteins S3 and S10.

Functionally, binds 16S rRNA, required for the assembly of 30S particles and may also be responsible for determining the conformation of the 16S rRNA at the A site. The protein is Small ribosomal subunit protein uS14 of Wolbachia pipientis wMel.